Consider the following 457-residue polypeptide: Argininosuccinate lyase (457 aa).

This sequence belongs to the lyase 1 family. Argininosuccinate lyase subfamily.

The protein resides in the cytoplasm. The enzyme catalyses 2-(N(omega)-L-arginino)succinate = fumarate + L-arginine. It functions in the pathway amino-acid biosynthesis; L-arginine biosynthesis; L-arginine from L-ornithine and carbamoyl phosphate: step 3/3. The chain is Argininosuccinate lyase from Shewanella sediminis (strain HAW-EB3).